The primary structure comprises 145 residues: 3-hydroxyacyl-[acyl-carrier-protein] dehydratase FabZ (145 aa).

Residue histidine 48 is part of the active site.

The protein belongs to the thioester dehydratase family. FabZ subfamily.

It is found in the cytoplasm. It catalyses the reaction a (3R)-hydroxyacyl-[ACP] = a (2E)-enoyl-[ACP] + H2O. Functionally, involved in unsaturated fatty acids biosynthesis. Catalyzes the dehydration of short chain beta-hydroxyacyl-ACPs and long chain saturated and unsaturated beta-hydroxyacyl-ACPs. This chain is 3-hydroxyacyl-[acyl-carrier-protein] dehydratase FabZ, found in Marinobacter nauticus (strain ATCC 700491 / DSM 11845 / VT8) (Marinobacter aquaeolei).